Consider the following 574-residue polypeptide: K(+)/H(+) antiporter NhaP2 (574 aa).

Helical transmembrane passes span 6-26 (INSF…LSPV), 34-54 (ILLI…GGIL), 58-78 (YSTA…DGGM), 87-107 (VALW…TSIT), 109-129 (VMAA…GAIV), 173-193 (IAIL…ISFI), 196-216 (FGLG…LVNL), 219-239 (LAEG…YAAS), 242-262 (LGGS…NKPT), 271-291 (VLDG…GLLL), 299-319 (IWLP…PLAV), 335-355 (WFIS…VFPM), and 359-379 (LPGA…SLLV). The 82-residue stretch at 405 to 486 (SGVEIYPSSE…LEALSNLFSQ (82 aa)) folds into the RCK C-terminal domain.

Belongs to the monovalent cation:proton antiporter 1 (CPA1) transporter (TC 2.A.36) family. NhaP2 subfamily.

The protein resides in the cell inner membrane. The enzyme catalyses K(+)(in) + H(+)(out) = K(+)(out) + H(+)(in). Functionally, k(+)/H(+) antiporter that extrudes potassium in exchange for external protons and maintains the internal concentration of potassium under toxic levels. This Shewanella sp. (strain MR-7) protein is K(+)/H(+) antiporter NhaP2.